The following is a 489-amino-acid chain: ATP synthase subunit beta, chloroplastic (489 aa).

Residue 170–177 (GGAGVGKT) coordinates ATP.

This sequence belongs to the ATPase alpha/beta chains family. As to quaternary structure, F-type ATPases have 2 components, CF(1) - the catalytic core - and CF(0) - the membrane proton channel. CF(1) has five subunits: alpha(3), beta(3), gamma(1), delta(1), epsilon(1). CF(0) has four main subunits: a(1), b(1), b'(1) and c(9-12).

The protein localises to the plastid. It is found in the chloroplast thylakoid membrane. The catalysed reaction is ATP + H2O + 4 H(+)(in) = ADP + phosphate + 5 H(+)(out). Produces ATP from ADP in the presence of a proton gradient across the membrane. The catalytic sites are hosted primarily by the beta subunits. This chain is ATP synthase subunit beta, chloroplastic, found in Zygnema circumcarinatum (Green alga).